Reading from the N-terminus, the 203-residue chain is ATP-dependent Clp protease proteolytic subunit 2 (203 aa).

The active-site Nucleophile is Ser-101. His-126 is a catalytic residue.

Belongs to the peptidase S14 family. Fourteen ClpP subunits assemble into 2 heptameric rings which stack back to back to give a disk-like structure with a central cavity, resembling the structure of eukaryotic proteasomes.

It is found in the cytoplasm. The enzyme catalyses Hydrolysis of proteins to small peptides in the presence of ATP and magnesium. alpha-casein is the usual test substrate. In the absence of ATP, only oligopeptides shorter than five residues are hydrolyzed (such as succinyl-Leu-Tyr-|-NHMec, and Leu-Tyr-Leu-|-Tyr-Trp, in which cleavage of the -Tyr-|-Leu- and -Tyr-|-Trp bonds also occurs).. In terms of biological role, cleaves peptides in various proteins in a process that requires ATP hydrolysis. Has a chymotrypsin-like activity. Plays a major role in the degradation of misfolded proteins. The chain is ATP-dependent Clp protease proteolytic subunit 2 from Prochlorococcus marinus (strain MIT 9312).